The following is a 215-amino-acid chain: Phosphatidylserine decarboxylase proenzyme (215 aa).

Ser-184 functions as the Schiff-base intermediate with substrate; via pyruvic acid in the catalytic mechanism. Ser-184 is modified (pyruvic acid (Ser); by autocatalysis).

It belongs to the phosphatidylserine decarboxylase family. PSD-A subfamily. In terms of assembly, heterodimer of a large membrane-associated beta subunit and a small pyruvoyl-containing alpha subunit. Pyruvate serves as cofactor. Is synthesized initially as an inactive proenzyme. Formation of the active enzyme involves a self-maturation process in which the active site pyruvoyl group is generated from an internal serine residue via an autocatalytic post-translational modification. Two non-identical subunits are generated from the proenzyme in this reaction, and the pyruvate is formed at the N-terminus of the alpha chain, which is derived from the carboxyl end of the proenzyme. The post-translation cleavage follows an unusual pathway, termed non-hydrolytic serinolysis, in which the side chain hydroxyl group of the serine supplies its oxygen atom to form the C-terminus of the beta chain, while the remainder of the serine residue undergoes an oxidative deamination to produce ammonia and the pyruvoyl prosthetic group on the alpha chain.

It is found in the cell membrane. The catalysed reaction is a 1,2-diacyl-sn-glycero-3-phospho-L-serine + H(+) = a 1,2-diacyl-sn-glycero-3-phosphoethanolamine + CO2. It functions in the pathway phospholipid metabolism; phosphatidylethanolamine biosynthesis; phosphatidylethanolamine from CDP-diacylglycerol: step 2/2. In terms of biological role, catalyzes the formation of phosphatidylethanolamine (PtdEtn) from phosphatidylserine (PtdSer). This is Phosphatidylserine decarboxylase proenzyme from Aromatoleum aromaticum (strain DSM 19018 / LMG 30748 / EbN1) (Azoarcus sp. (strain EbN1)).